The primary structure comprises 306 residues: Protein FdhE homolog (306 aa).

This sequence belongs to the FdhE family.

The protein resides in the cytoplasm. Functionally, necessary for formate dehydrogenase activity. In Glaesserella parasuis serovar 5 (strain SH0165) (Haemophilus parasuis), this protein is Protein FdhE homolog.